Reading from the N-terminus, the 428-residue chain is MAKEKPHVNIVFIGHVDHGKSTTIGRLLFDTANIPENIIKKFEEMGEKGKSFKFAWVMDRLKEERERGITIDVAHTKFETPHRYITIIDAPGHRDFVKNMITGASQADAAVLVVAATDGVMPQTKEHAFLARTLGINHIIVAINKMDMVNYDEKKFKQVAEQVKKLLQMLGYKDFPIIPISAWEGDNVVKKSDKMPWYNGPTLLEALDQIPEPPKPVDKPLRIPIQDVYSIKGVGTVPVGRVETGVLRVGDVVIFEPASTIFHKPIQGEVKSIEMHHEPLQEAYPGDNIGFNVRGVGKNDIKRGDVAGHTTNPPTVVRPKDTFKAQIIVLNHPTAITVGYTPVLHAHTTQVAVRFEQLLAKLDPRTGNIVEENPQFIKTGDSAIVILRPTKAMVIEPVKEIPQMGRFAIRDMGQTVAAGMVISIQKAD.

A tr-type G domain is found at 5–215 (KPHVNIVFIG…ALDQIPEPPK (211 aa)). The tract at residues 14 to 21 (GHVDHGKS) is G1. 14–21 (GHVDHGKS) is a GTP binding site. Position 21 (Ser21) interacts with Mg(2+). Positions 68–72 (GITID) are G2. The interval 89 to 92 (DAPG) is G3. Residues 89–93 (DAPGH) and 144–147 (NKMD) each bind GTP. The segment at 144–147 (NKMD) is G4. Residues 181-183 (SAW) are G5.

The protein belongs to the TRAFAC class translation factor GTPase superfamily. Classic translation factor GTPase family. EF-Tu/EF-1A subfamily.

It localises to the cytoplasm. The enzyme catalyses GTP + H2O = GDP + phosphate + H(+). In terms of biological role, GTP hydrolase that promotes the GTP-dependent binding of aminoacyl-tRNA to the A-site of ribosomes during protein biosynthesis. The sequence is that of Elongation factor 1-alpha from Thermococcus kodakarensis (strain ATCC BAA-918 / JCM 12380 / KOD1) (Pyrococcus kodakaraensis (strain KOD1)).